The chain runs to 374 residues: Putative glutamate--cysteine ligase 2 (374 aa).

The protein belongs to the glutamate--cysteine ligase type 2 family. YbdK subfamily.

It carries out the reaction L-cysteine + L-glutamate + ATP = gamma-L-glutamyl-L-cysteine + ADP + phosphate + H(+). Functionally, ATP-dependent carboxylate-amine ligase which exhibits weak glutamate--cysteine ligase activity. The polypeptide is Putative glutamate--cysteine ligase 2 (Leptothrix cholodnii (strain ATCC 51168 / LMG 8142 / SP-6) (Leptothrix discophora (strain SP-6))).